The following is a 62-amino-acid chain: Large ribosomal subunit protein eL37 (62 aa).

Zn(2+)-binding residues include cysteine 20, cysteine 23, cysteine 35, and cysteine 38. Residues 20–38 (CRRCGRKAFNVKKGYCAAC) form a C4-type zinc finger.

This sequence belongs to the eukaryotic ribosomal protein eL37 family. Requires Zn(2+) as cofactor.

In terms of biological role, binds to the 23S rRNA. This chain is Large ribosomal subunit protein eL37 (rpl37e), found in Pyrococcus abyssi (strain GE5 / Orsay).